The primary structure comprises 408 residues: Solute carrier family 35 member F1 (408 aa).

The disordered stretch occupies residues 1 to 21 (MIPPEQPQQQLQPPSPAPPNH). 10 helical membrane passes run 60-80 (MLIS…IGLT), 94-114 (VFQS…TLAV), 129-147 (WWKY…YLVV), 158-178 (IQLL…FFLL), 186-206 (FIGI…DVLV), 221-241 (LLVL…EYII), 247-267 (VEFL…QLAI), 284-304 (LLYV…PVVI), 311-331 (SVNL…LFLF), and 335-355 (FSGL…LYSS).

It belongs to the SLC35F solute transporter family.

The protein localises to the cytoplasmic vesicle. Its subcellular location is the secretory vesicle. The protein resides in the synaptic vesicle membrane. Functionally, putative solute transporter. The sequence is that of Solute carrier family 35 member F1 (SLC35F1) from Homo sapiens (Human).